A 257-amino-acid chain; its full sequence is Protein YIPF5 (257 aa).

The Cytoplasmic portion of the chain corresponds to 1 to 124 (MSGFDNLNSG…RAADGSIMNE (124 aa)). The segment at 75 to 106 (PTTPQPFYGDSFEEEPPLLEELGINFDHIWQK) is interaction with Sec23. The chain crosses the membrane as a helical span at residues 125 to 145 (TDLAGPVVFCLAFGATLLLAG). A topological domain (lumenal) is located at residue Lys-146. A helical transmembrane segment spans residues 147–167 (IQFGYVYGISAIGCLGMFCLL). Topologically, residues 168-173 (NLMSMT) are cytoplasmic. The helical transmembrane segment at 174–194 (GVSFGCVASVLGYCLLPMILL) threads the bilayer. Topologically, residues 195 to 196 (SS) are lumenal. A helical transmembrane segment spans residues 197-217 (FAVVFSLQGMVGILLTATIIG). Residues 218–236 (WCSFSASKIFISALAMDGQ) lie on the Cytoplasmic side of the membrane. The helical transmembrane segment at 237-257 (QLLVAYPCALLYGVFALISVF) threads the bilayer.

The protein belongs to the YIP1 family. As to quaternary structure, interacts with the COPII coat components Sec23 (SEC23A and/or SEC23B) and Sec24 (SEC24A and/or SEC24B). Interacts with YIF1A. May interact with RAB1A. Interacts with YIPF3 and YIPF4. Ubiquitously expressed.

The protein resides in the golgi apparatus. The protein localises to the cis-Golgi network membrane. It is found in the cytoplasmic vesicle. Its subcellular location is the COPII-coated vesicle. It localises to the endoplasmic reticulum membrane. In terms of biological role, plays a role in transport between endoplasmic reticulum and Golgi. In pancreatic beta cells, required to transport proinsulin from endoplasmic reticulum into the Golgi. The polypeptide is Protein YIPF5 (Mus musculus (Mouse)).